We begin with the raw amino-acid sequence, 496 residues long: Tripartite motif-containing protein 30A (496 aa).

Residues 15–59 form an RING-type zinc finger; the sequence is CPICLELLKEPVSADCNHSFCRACITLNYESNRNTDGKGNCPVCR. The B box-type zinc finger occupies 91-132; it reads QKVNICAQHGEKLRLFCRKDMMVICWLCERSQEHRGHQTALI. Zn(2+)-binding residues include Cys96, His99, Cys118, and His124. The stretch at 173-239 forms a coiled coil; it reads NQIQINVENV…RDLISDVEHH (67 aa). Positions 205–210 are highly hydrophilic; sequence KKEKKE. Positions 268–276 match the Nuclear localization signal motif; sequence TVPQKRKRT. Positions 281 to 496 constitute a B30.2/SPRY domain; sequence DLKGMLQVYQ…EPMTICGPPS (216 aa).

As to quaternary structure, homomultimer. Interacts with NR2C2/TAK1, TAB2 and TAB3. Does not interact with NLRP3, NLRC4 or TAB1. As to expression, highly expressed in spleen and lymph nodes (at protein level).

It is found in the cytoplasm. The protein localises to the nucleus. Functionally, trans-acting factor that regulates gene expression of interleukin 2 receptor alpha chain. May affect IL2R-alpha expression through cis-acting negative regulatory elements or through competition with proteins that bind to enhancer or activator sequences. Negatively regulates Toll-like receptor (TLR)-mediated activation of NFKB by promoting degradation of TAB2 and TAB3 and preventing TRAF6 autoubiquitination. Negatively regulates production of reactive oxygen species (ROS) which inhibits activation of the NLRP3 inflammasome complex. This, in turn, regulates activation of CASP1 and subsequent cleavage of IL1B and IL18. No activity detected against a range of retroviruses including a number of lentiviruses, gammaretroviruses and betaretroviruses. In Mus musculus (Mouse), this protein is Tripartite motif-containing protein 30A (Trim30a).